A 302-amino-acid polypeptide reads, in one-letter code: Bifunctional protein FolD (302 aa).

NADP(+)-binding positions include 165-167 (GRS), serine 190, and isoleucine 231.

This sequence belongs to the tetrahydrofolate dehydrogenase/cyclohydrolase family. Homodimer.

It carries out the reaction (6R)-5,10-methylene-5,6,7,8-tetrahydrofolate + NADP(+) = (6R)-5,10-methenyltetrahydrofolate + NADPH. The enzyme catalyses (6R)-5,10-methenyltetrahydrofolate + H2O = (6R)-10-formyltetrahydrofolate + H(+). It functions in the pathway one-carbon metabolism; tetrahydrofolate interconversion. Functionally, catalyzes the oxidation of 5,10-methylenetetrahydrofolate to 5,10-methenyltetrahydrofolate and then the hydrolysis of 5,10-methenyltetrahydrofolate to 10-formyltetrahydrofolate. The chain is Bifunctional protein FolD from Prochlorococcus marinus (strain MIT 9313).